The following is a 993-amino-acid chain: Signal peptide, CUB and EGF-like domain-containing protein 3 (993 aa).

An N-terminal signal peptide occupies residues 1–20 (MGSGRVPGLCLLLLLVHARA). The region spanning 29-69 (DVDECVEGTDNCHIDAICQNTPRSYKCICKSGYTGDGKHCK) is the EGF-like 1; calcium-binding domain. 26 cysteine pairs are disulfide-bonded: Cys-33–Cys-46, Cys-40–Cys-55, Cys-57–Cys-68, Cys-74–Cys-86, Cys-82–Cys-95, Cys-97–Cys-110, Cys-116–Cys-127, Cys-123–Cys-136, Cys-161–Cys-172, Cys-168–Cys-182, Cys-184–Cys-197, Cys-201–Cys-212, Cys-208–Cys-221, Cys-223–Cys-236, Cys-240–Cys-251, Cys-247–Cys-260, Cys-262–Cys-275, Cys-281–Cys-292, Cys-288–Cys-301, Cys-303–Cys-316, Cys-322–Cys-332, Cys-328–Cys-341, Cys-343–Cys-355, Cys-361–Cys-372, Cys-368–Cys-381, and Cys-383–Cys-397. The EGF-like 2; calcium-binding domain maps to 70 to 111 (DVDECEREDNAGCVHDCVNIPGNYRCTCYDGFHLAHDGHNCL). The 37-residue stretch at 112–148 (DVDECAEGNGGCQQSCVNMMGSYECHCRDGFFLSDNQ) folds into the EGF-like 3; calcium-binding domain. EGF-like domains are found at residues 157–198 (EGMN…RDCK), 199–237 (LTCN…KTCI), and 238–276 (ETCA…KTCK). The 41-residue stretch at 277–317 (DIDECRLNNGGCDHICRNTVGSFECSCKKGYKLLINERSCQ) folds into the EGF-like 7; calcium-binding domain. Residues 318–356 (DIDECSFDRTCDHMCVNTPGSFQCLCHRGYLLYGVTHCG) enclose the EGF-like 8; calcium-binding domain. Residues 357-398 (DVDECSINKGGCRFGCINTPGSYQCTCPAGQGRLHWNGKDCT) enclose the EGF-like 9; calcium-binding domain. 5 N-linked (GlcNAc...) asparagine glycosylation sites follow: Asn-417, Asn-464, Asn-685, Asn-756, and Asn-785. Disulfide bonds link Cys-804-Cys-830 and Cys-857-Cys-878. A CUB domain is found at 804–916 (CGGELGEFTG…RGFQIPYVTY (113 aa)).

In terms of assembly, forms homooligomers. Forms heterooligomers with SCUBE1 and SCUBE2. Interacts with TGFBR2 through the CUB domain; this interaction does not affect TGFB1-binding to TGFBR2. Interacts with BMP2, BMP4 and BMP7; the interaction is mediated by the CUB domain. Interacts with BMPR1A, BMPR1B and BMPR2; the interaction with BMPR1A and BMPR1B is BMP2- and BMP4-dependent. Post-translationally, N-glycosylated. In terms of processing, proteolytic cleavage produces a CUB-containing C-terminal fragment that retains the ability to bind to TGFBR2. This reaction is catalyzed in vitro by MMP2 and, to a lesser extent, by MMP9. As to expression, highly expressed in femur and humerus with little or no expression in non-bone tissues.

It is found in the secreted. The protein resides in the cell surface. Is a positive regulator of the BMP signaling pathway, required for proper chondrogenesis, osteogenesis and skeletal development. It acts as a coreceptor for BMP ligands, particularly BMP2 and BMP4, facilitating their interactions with BMP type I receptors. It is required for ligand-induced recruitment of BMP receptors to lipid rafts. Binds to TGFBR2 and activates TGFB signaling. This is Signal peptide, CUB and EGF-like domain-containing protein 3 from Mus musculus (Mouse).